The sequence spans 443 residues: Type I restriction enzyme HindI methylase subunit (443 aa).

S-adenosyl-L-methionine-binding positions include 117-122 (QYFTPK), 146-148 (SGG), and glutamate 173.

It belongs to the N(4)/N(6)-methyltransferase family. The type I restriction/modification system is composed of three polypeptides R, M and S; the restriction enzyme has stoichiometry R(2)M(2)S(1) while the methyltransferase is M(2)S(1).

The catalysed reaction is a 2'-deoxyadenosine in DNA + S-adenosyl-L-methionine = an N(6)-methyl-2'-deoxyadenosine in DNA + S-adenosyl-L-homocysteine + H(+). The subtype gamma methyltransferase (M) subunit of a type I restriction enzyme. The M and S subunits together form a methyltransferase (MTase) that methylates adenosines in the sequence 5'-RAACN(5)TAG-3'. Methylation protects against cleavage by HindI. In the presence of the R subunit the complex can also act as an endonuclease, binding to the same target sequence but cutting the DNA some distance from this site. Whether the DNA is cut or modified depends on the methylation state of the target sequence. When the target site is unmodified, the DNA is cut. When the target site is hemimethylated, the complex acts as a maintenance MTase modifying the DNA so that both strands become methylated. After locating a non-methylated recognition site, the enzyme complex serves as a molecular motor that translocates DNA in an ATP-dependent manner until a collision occurs that triggers cleavage. The sequence is that of Type I restriction enzyme HindI methylase subunit from Haemophilus influenzae (strain ATCC 51907 / DSM 11121 / KW20 / Rd).